A 323-amino-acid chain; its full sequence is MTIRAVVRGVGHYLPDRVVPNSELEAIVETTDEWIRTRSGIERRHFAAEGQTTSDLAARAARAALEDAGLQPDDIDTLIVATSTADLTFPSAATMVQAALGMTRGFAFDVQAVCAGFVYALANADALIRSGQAQRVLVIGAETFSRLMDWNDRATCVLFGDGAGAVVLEGTESAGTSADRGILATDLHSDGRFKDLLYVDGGSSTGTTGHLRMQGREVFRHAVEKLAETAHTALEKAGLGAGDVDWIVPHQANLRIISATAQRMQVPMDRVILTVQDHGNTSAASIPLALSVGKARGQIKEGDLLVTEAIGGGLAWGSVVLRW.

Residues Cys-114 and His-250 contribute to the active site. Positions 251–255 (QANLR) are ACP-binding. Asn-280 is a catalytic residue.

It belongs to the thiolase-like superfamily. FabH family. In terms of assembly, homodimer.

Its subcellular location is the cytoplasm. The catalysed reaction is malonyl-[ACP] + acetyl-CoA + H(+) = 3-oxobutanoyl-[ACP] + CO2 + CoA. It functions in the pathway lipid metabolism; fatty acid biosynthesis. Catalyzes the condensation reaction of fatty acid synthesis by the addition to an acyl acceptor of two carbons from malonyl-ACP. Catalyzes the first condensation reaction which initiates fatty acid synthesis and may therefore play a role in governing the total rate of fatty acid production. Possesses both acetoacetyl-ACP synthase and acetyl transacylase activities. Its substrate specificity determines the biosynthesis of branched-chain and/or straight-chain of fatty acids. The protein is Beta-ketoacyl-[acyl-carrier-protein] synthase III of Cereibacter sphaeroides (strain ATCC 17023 / DSM 158 / JCM 6121 / CCUG 31486 / LMG 2827 / NBRC 12203 / NCIMB 8253 / ATH 2.4.1.) (Rhodobacter sphaeroides).